The following is a 76-amino-acid chain: Bomanin Tailed 2 (76 aa).

The N-terminal stretch at 1 to 22 is a signal peptide; sequence MKALQVAGTLMLLFCLLAAVNA. A propeptide spans 23–24 (removed by a dipeptidylpeptidase); the sequence is TP. Cys-33 and Cys-36 are oxidised to a cystine.

Belongs to the bomanin family.

It localises to the secreted. Its function is as follows. Secreted immune-induced peptide induced by Toll signaling. Has a role in resistance to bacterial and fungal infections. The strength of antimicrobial activity appears to correlate with the overall level of expression. This Drosophila melanogaster (Fruit fly) protein is Bomanin Tailed 2.